The chain runs to 565 residues: DNA primase (565 aa).

Residues cysteine 37 to cysteine 61 form a CHC2-type zinc finger. A Toprim domain is found at glycine 248–tyrosine 329. Mg(2+)-binding residues include glutamate 254, aspartate 298, and aspartate 300.

The protein belongs to the DnaG primase family. Monomer. Interacts with DnaB. Zn(2+) is required as a cofactor. Requires Mg(2+) as cofactor.

It catalyses the reaction ssDNA + n NTP = ssDNA/pppN(pN)n-1 hybrid + (n-1) diphosphate.. Its function is as follows. RNA polymerase that catalyzes the synthesis of short RNA molecules used as primers for DNA polymerase during DNA replication. The protein is DNA primase of Thermotoga maritima (strain ATCC 43589 / DSM 3109 / JCM 10099 / NBRC 100826 / MSB8).